Here is a 103-residue protein sequence, read N- to C-terminus: Large ribosomal subunit protein uL24 (103 aa).

Belongs to the universal ribosomal protein uL24 family. In terms of assembly, part of the 50S ribosomal subunit.

In terms of biological role, one of two assembly initiator proteins, it binds directly to the 5'-end of the 23S rRNA, where it nucleates assembly of the 50S subunit. Its function is as follows. One of the proteins that surrounds the polypeptide exit tunnel on the outside of the subunit. This chain is Large ribosomal subunit protein uL24, found in Geobacillus sp. (strain WCH70).